The primary structure comprises 40 residues: Antifungal protein ginkbilobin-1 (40 aa).

Positions 3-40 (TAFVSSAHNTQKIPAGAPFNRNLRAMLADLRQNAAFAG) constitute a Gnk2-homologous domain. Asn11 is a binding site for alpha-D-mannopyranose.

As to expression, expressed in seeds (at the protein level).

Functionally, possesses antifungal activity against B.cinerea, M.arachidicola, F.oxysporum, R.solani and C.comatus and moderate antibacterial activity against S.aureus, P.aeruginosa and E.coli. Inhibits HIV-1 reverse transcriptase and proliferation of murine splenocytes. Exerts antifungal activity through its carbohydrate-binding specificity. The chain is Antifungal protein ginkbilobin-1 from Ginkgo biloba (Ginkgo).